The sequence spans 152 residues: D-aminoacyl-tRNA deacylase (152 aa).

The Gly-cisPro motif, important for rejection of L-amino acids signature appears at 142 to 143; the sequence is GP.

This sequence belongs to the DTD family. Homodimer.

It is found in the cytoplasm. The enzyme catalyses glycyl-tRNA(Ala) + H2O = tRNA(Ala) + glycine + H(+). It carries out the reaction a D-aminoacyl-tRNA + H2O = a tRNA + a D-alpha-amino acid + H(+). Functionally, an aminoacyl-tRNA editing enzyme that deacylates mischarged D-aminoacyl-tRNAs. Also deacylates mischarged glycyl-tRNA(Ala), protecting cells against glycine mischarging by AlaRS. Acts via tRNA-based rather than protein-based catalysis; rejects L-amino acids rather than detecting D-amino acids in the active site. By recycling D-aminoacyl-tRNA to D-amino acids and free tRNA molecules, this enzyme counteracts the toxicity associated with the formation of D-aminoacyl-tRNA entities in vivo and helps enforce protein L-homochirality. The chain is D-aminoacyl-tRNA deacylase from Paraburkholderia xenovorans (strain LB400).